Here is a 120-residue protein sequence, read N- to C-terminus: Ribonuclease P protein component (120 aa).

The protein belongs to the RnpA family. As to quaternary structure, consists of a catalytic RNA component (M1 or rnpB) and a protein subunit.

It carries out the reaction Endonucleolytic cleavage of RNA, removing 5'-extranucleotides from tRNA precursor.. Functionally, RNaseP catalyzes the removal of the 5'-leader sequence from pre-tRNA to produce the mature 5'-terminus. It can also cleave other RNA substrates such as 4.5S RNA. The protein component plays an auxiliary but essential role in vivo by binding to the 5'-leader sequence and broadening the substrate specificity of the ribozyme. This chain is Ribonuclease P protein component, found in Dehalococcoides mccartyi (strain CBDB1).